A 151-amino-acid polypeptide reads, in one-letter code: Prefoldin subunit alpha (151 aa).

The disordered stretch occupies residues 120–151; it reads TVEEETASLEEKAQQAQQQQMQQLQQMQQEDE. Residues 133-151 show a composition bias toward low complexity; the sequence is QQAQQQQMQQLQQMQQEDE.

Belongs to the prefoldin subunit alpha family. Heterohexamer of two alpha and four beta subunits.

Its subcellular location is the cytoplasm. Molecular chaperone capable of stabilizing a range of proteins. Seems to fulfill an ATP-independent, HSP70-like function in archaeal de novo protein folding. This Natronomonas pharaonis (strain ATCC 35678 / DSM 2160 / CIP 103997 / JCM 8858 / NBRC 14720 / NCIMB 2260 / Gabara) (Halobacterium pharaonis) protein is Prefoldin subunit alpha.